The primary structure comprises 1447 residues: Inositol 1,4,5-triphosphate receptor associated 2 (1447 aa).

At 1–1388 the chain is on the cytoplasmic side; it reads MDVGVTPRRH…RPAVSRGARG (1388 aa). Disordered stretches follow at residues 64-96 and 420-439; these read VRPDDSDSASSAGMLTPTASPGPGSSCNTPRAP and LSLTSSEESRAQAAAQRKQM. Polar residues predominate over residues 71–92; it reads SASSAGMLTPTASPGPGSSCNT. Coiled coils occupy residues 354–518 and 665–731; these read FCVA…EYSS and TDWI…DNRE. The segment covering 420–436 has biased composition (low complexity); it reads LSLTSSEESRAQAAAQR. Disordered stretches follow at residues 790–828, 841–860, 991–1132, 1267–1289, and 1355–1379; these read KQEEEEPTETVSDKEKITAKSEGEGEATYDSGVENEEPQ, KKSERESNEAPFVGEGGEQR, PVAE…SPSD, NERSFGSHSERDDFRNKKQTTSN, and DEPTLMNSPTPSPTDNAPPSLMEGR. A compositionally biased stretch (basic and acidic residues) spans 800–812; it reads VSDKEKITAKSEG. A compositionally biased stretch (polar residues) spans 1021–1035; sequence KKTVVTSDSNSTGSA. Basic and acidic residues-rich tracts occupy residues 1037 to 1049 and 1080 to 1096; these read SLKDPSEKVKDMT and KKEMSSMEVIEEQKAQE. The segment at 1076-1265 is necessary for spindle and spindle pole localization; sequence RNKLKKEMSS…ELLELRENLT (190 aa). Residues 1110–1119 show a composition bias toward polar residues; that stretch reads TSVSSENASD. A compositionally biased stretch (basic and acidic residues) spans 1120 to 1132; that stretch reads STKDDKNSLSPSD. Residues 1359-1371 are compositionally biased toward polar residues; that stretch reads LMNSPTPSPTDNA. The necessary for nuclear membrane localization stretch occupies residues 1388–1447; sequence GIWIWVALFVVLAVLLALLASLMLQPAVDAAPVGTGDSWMTIQQLLWPYTGLRHNGQPPV. Residues 1389 to 1409 form a helical; Anchor for type IV membrane protein membrane-spanning segment; that stretch reads IWIWVALFVVLAVLLALLASL. At 1410-1447 the chain is on the lumenal side; sequence MLQPAVDAAPVGTGDSWMTIQQLLWPYTGLRHNGQPPV.

It belongs to the IRAG2 family.

The protein localises to the endoplasmic reticulum membrane. Its subcellular location is the nucleus envelope. The protein resides in the cytoplasm. It localises to the cytoskeleton. It is found in the microtubule organizing center. The protein localises to the centrosome. Its subcellular location is the spindle pole. The protein resides in the chromosome. In terms of biological role, a maternally expressed membrane and cytoskeletal linker protein, which is essential for attachment of the centrosome to the male pronucleus. Promotes male and female pronucleus congression and subsequent fusion after fertilization. Congression is mediated by the sperm aster microtubules. This Danio rerio (Zebrafish) protein is Inositol 1,4,5-triphosphate receptor associated 2 (irag2).